The sequence spans 421 residues: Gamma-glutamyl phosphate reductase (421 aa).

This sequence belongs to the gamma-glutamyl phosphate reductase family.

The protein localises to the cytoplasm. The enzyme catalyses L-glutamate 5-semialdehyde + phosphate + NADP(+) = L-glutamyl 5-phosphate + NADPH + H(+). It functions in the pathway amino-acid biosynthesis; L-proline biosynthesis; L-glutamate 5-semialdehyde from L-glutamate: step 2/2. In terms of biological role, catalyzes the NADPH-dependent reduction of L-glutamate 5-phosphate into L-glutamate 5-semialdehyde and phosphate. The product spontaneously undergoes cyclization to form 1-pyrroline-5-carboxylate. This is Gamma-glutamyl phosphate reductase from Stutzerimonas stutzeri (strain A1501) (Pseudomonas stutzeri).